Consider the following 88-residue polypeptide: Alpha-latrotoxin associated low molecular weight protein 2 (88 aa).

Positions 1 to 19 (MLKLICIVFLVTVLTFVVG) are cleaved as a signal peptide. Disulfide bonds link cysteine 30-cysteine 66, cysteine 46-cysteine 62, and cysteine 49-cysteine 75.

This sequence belongs to the arthropod CHH/MIH/GIH/VIH hormone family. Expressed by the venom gland.

Its subcellular location is the secreted. May increase the toxicity of alpha-latrotoxin and/or other venom components. Is non-toxic to mice and to the cockroach Periplaneta americana. In Latrodectus geometricus (Brown widow spider), this protein is Alpha-latrotoxin associated low molecular weight protein 2.